A 399-amino-acid polypeptide reads, in one-letter code: Elongation factor Tu (399 aa).

Residues 10 to 204 (KPHVNIGTIG…SVDESIPEPE (195 aa)) enclose the tr-type G domain. Residues 19–26 (GHVDHGKT) are G1. 19–26 (GHVDHGKT) is a binding site for GTP. Thr26 lines the Mg(2+) pocket. A G2 region spans residues 60-64 (GITIN). The G3 stretch occupies residues 81–84 (DCPG). GTP-binding positions include 81–85 (DCPGH) and 136–139 (NKCD). Residues 136 to 139 (NKCD) are G4. The segment at 174–176 (SAL) is G5.

Belongs to the TRAFAC class translation factor GTPase superfamily. Classic translation factor GTPase family. EF-Tu/EF-1A subfamily. Monomer.

It is found in the cytoplasm. The catalysed reaction is GTP + H2O = GDP + phosphate + H(+). Functionally, GTP hydrolase that promotes the GTP-dependent binding of aminoacyl-tRNA to the A-site of ribosomes during protein biosynthesis. In Prochlorococcus marinus (strain MIT 9211), this protein is Elongation factor Tu.